Consider the following 239-residue polypeptide: Phosducin-like protein 3 (239 aa).

An N-acetylmethionine modification is found at methionine 1. Residues 32 to 180 (EAEEEQRILQ…EGDIKAQFIG (149 aa)) form the Phosducin domain. Position 43 is a phosphoserine (serine 43). The interval 91 to 239 (FGEVLEISGK…MKRDSDSEGD (149 aa)) is thioredoxin fold. Interaction with XIAP regions lie at residues 97-99 (ISG) and 153-155 (TCI). Phosphoserine occurs at positions 234 and 236.

This sequence belongs to the phosducin family. Interacts (via thioredoxin fold region) with KDR/VEGFR2 (via juxtamembrane domain). Forms ternary complexes with the chaperonin CCT complex and actin substrate, leading to inhibition of actin folding. Interacts with XIAP (via BIR 3 and RING domain). Interacts with HSP90AA1 and HSP90AB1. In terms of processing, N-terminal methionine acetylation destabilizes the protein. Expressed in endothelial cells (at protein level). Expressed in all tissues examined including spleen, thymus, prostate, testis, ovary, small intestine and colon.

Its subcellular location is the cytoplasm. It is found in the perinuclear region. The protein localises to the endoplasmic reticulum. In terms of biological role, acts as a chaperone for the angiogenic VEGF receptor KDR/VEGFR2, increasing its abundance by inhibiting its ubiquitination and degradation. Inhibits the folding activity of the chaperonin-containing T-complex (CCT) which leads to inhibition of cytoskeletal actin folding. Acts as a chaperone during heat shock alongside HSP90 and HSP40/70 chaperone complexes. Modulates the activation of caspases during apoptosis. The sequence is that of Phosducin-like protein 3 (PDCL3) from Homo sapiens (Human).